The following is a 282-amino-acid chain: Bacterial lipoprotein FTN_1103 (282 aa).

A signal peptide spans 1–28 (MKYGNLMMTKKKLLIGMVTISGIVILGS). Cys29 is lipidated: N-palmitoyl cysteine. Residue Cys29 is the site of S-diacylglycerol cysteine attachment.

It is found in the cell membrane. In terms of biological role, stimulates the host immune inflammatory signaling system allowing the host to combat the bacteria. Stimulates mouse interleukin-6 (Il6) production. This is Bacterial lipoprotein FTN_1103 from Francisella tularensis subsp. novicida (strain U112).